A 463-amino-acid chain; its full sequence is Glutamate--tRNA ligase 2 (463 aa).

The 'HIGH' region motif lies at 11-21 (PSPTGYLHIGG). The 'KMSKS' region signature appears at 240–244 (KLSKR). Position 243 (lysine 243) interacts with ATP.

The protein belongs to the class-I aminoacyl-tRNA synthetase family. Glutamate--tRNA ligase type 1 subfamily. Monomer.

The protein resides in the cytoplasm. The enzyme catalyses tRNA(Glu) + L-glutamate + ATP = L-glutamyl-tRNA(Glu) + AMP + diphosphate. In terms of biological role, catalyzes the attachment of glutamate to tRNA(Glu) in a two-step reaction: glutamate is first activated by ATP to form Glu-AMP and then transferred to the acceptor end of tRNA(Glu). The chain is Glutamate--tRNA ligase 2 from Campylobacter jejuni subsp. jejuni serotype O:6 (strain 81116 / NCTC 11828).